The sequence spans 39 residues: Natriuretic peptide PaNP-d (39 aa).

Residues 1-8 (SGSKTAEI) constitute a propeptide that is removed on maturation. A disordered region spans residues 1–39 (SGSKTAEIDDGCFGLPLDPIGSTSGMGCRSVPKPIPGGS). Cys-12 and Cys-28 are disulfide-bonded.

This sequence belongs to the natriuretic peptide family. As to expression, expressed by the venom gland.

It is found in the secreted. In terms of biological role, snake venom natriuretic peptide that targets both NPR1 and NPR2. Exhibits hypotensive and vasodepressor activities. The polypeptide is Natriuretic peptide PaNP-d (Pseudechis australis (Mulga snake)).